We begin with the raw amino-acid sequence, 157 residues long: Small ribosomal subunit protein uS7 (157 aa).

It belongs to the universal ribosomal protein uS7 family. As to quaternary structure, part of the 30S ribosomal subunit. Contacts proteins S9 and S11.

In terms of biological role, one of the primary rRNA binding proteins, it binds directly to 16S rRNA where it nucleates assembly of the head domain of the 30S subunit. Is located at the subunit interface close to the decoding center, probably blocks exit of the E-site tRNA. This chain is Small ribosomal subunit protein uS7, found in Polaromonas naphthalenivorans (strain CJ2).